Reading from the N-terminus, the 583-residue chain is Protein LONG AFTER FAR-RED 3 (583 aa).

Residues 7-27 traverse the membrane as a helical segment; that stretch reads FPVMIGFVSAAVFLLISVAYL. N-linked (GlcNAc...) asparagine glycosylation is found at Asn-55 and Asn-374.

Belongs to the metallo-dependent hydrolases superfamily. As to expression, expressed at low level in seedlings, roots, leaves, stems, flowers, and siliques.

It is found in the membrane. The protein resides in the cytoplasm. It localises to the perinuclear region. In terms of biological role, required for phyA-controlled responses to continuous far-red light (FRc) conditions, including the inhibition of hypocotyl elongation and the regulation of XTH15/XTR7 expression. In Arabidopsis thaliana (Mouse-ear cress), this protein is Protein LONG AFTER FAR-RED 3.